The primary structure comprises 295 residues: Protein U26 (295 aa).

8 helical membrane-spanning segments follow: residues serine 31–lysine 51, isoleucine 66–isoleucine 86, valine 103–phenylalanine 123, tyrosine 131–isoleucine 151, phenylalanine 183–methionine 203, valine 218–glycine 238, valine 243–leucine 263, and phenylalanine 274–glycine 294.

The protein localises to the membrane. The polypeptide is Protein U26 (U26) (Homo sapiens (Human)).